Here is a 646-residue protein sequence, read N- to C-terminus: Translation initiation factor IF-2 (646 aa).

In terms of domain architecture, tr-type G spans 146–315; sequence PRPPVVTVMG…LLVAEMEELR (170 aa). The tract at residues 155-162 is G1; it reads GHVDHGKT. Residue 155–162 coordinates GTP; the sequence is GHVDHGKT. Residues 180–184 are G2; that stretch reads GITQH. Positions 201 to 204 are G3; the sequence is DTPG. Residues 201-205 and 255-258 contribute to the GTP site; these read DTPGH and NKID. The segment at 255 to 258 is G4; it reads NKID. A G5 region spans residues 291 to 293; the sequence is SAK.

The protein belongs to the TRAFAC class translation factor GTPase superfamily. Classic translation factor GTPase family. IF-2 subfamily.

The protein localises to the cytoplasm. One of the essential components for the initiation of protein synthesis. Protects formylmethionyl-tRNA from spontaneous hydrolysis and promotes its binding to the 30S ribosomal subunits. Also involved in the hydrolysis of GTP during the formation of the 70S ribosomal complex. In Clostridioides difficile (strain 630) (Peptoclostridium difficile), this protein is Translation initiation factor IF-2.